A 442-amino-acid chain; its full sequence is Putative mannan endo-1,6-alpha-mannosidase C1198.07c (442 aa).

An N-terminal signal peptide occupies residues 1-19 (MRYLSFFFEFFFLFSFAFA). At 20-421 (FDFDVTSDDS…TPATKSDKGW (402 aa)) the chain is on the lumenal side. N-linked (GlcNAc...) asparagine glycans are attached at residues N75, N124, N193, N229, N254, N257, and N356. A helical transmembrane segment spans residues 422–442 (AGFLTFAFSFVFLLFSIWLYF).

It belongs to the glycosyl hydrolase 76 family.

It localises to the endoplasmic reticulum membrane. The enzyme catalyses Random hydrolysis of (1-&gt;6)-alpha-D-mannosidic linkages in unbranched (1-&gt;6)-mannans.. This is Putative mannan endo-1,6-alpha-mannosidase C1198.07c from Schizosaccharomyces pombe (strain 972 / ATCC 24843) (Fission yeast).